A 198-amino-acid chain; its full sequence is Autophagy-related protein 16 (198 aa).

Positions 24–177 form a coiled coil; the sequence is ELVQTCSQMA…NKELVDRWMK (154 aa).

This sequence belongs to the ATG16 family. In terms of assembly, homodimer. Part of the ATG5-ATG12/ATG16 complex. Several units of each may be present in this complex. Interacts directly with ATG12.

It localises to the preautophagosomal structure membrane. In terms of biological role, stabilizes the ATG5-ATG12 conjugate. The ATG5-ATG12/ATG16 complex is required for efficient promotion of ATG8-conjugation to phosphatidylethanolamine and ATG8 localization to the pre-autophagosomal structure (PAS). Also recruits ATG3 to the PAS. Involved in endoplasmic reticulum-specific autophagic process and is essential for the survival of cells subjected to severe ER stress. Autophagy is required for proper vegetative growth, asexual/sexual reproduction, and full virulence. Autophagy is particularly involved in the biosynthesis of deoxynivalenol (DON), an important virulence determinant. The sequence is that of Autophagy-related protein 16 from Gibberella zeae (strain ATCC MYA-4620 / CBS 123657 / FGSC 9075 / NRRL 31084 / PH-1) (Wheat head blight fungus).